A 181-amino-acid polypeptide reads, in one-letter code: Regulator of G-protein signaling 5 (181 aa).

Residues 64 to 180 form the RGS domain; it reads SLDKLLQNSY…VRSEFYKELI (117 aa).

As to expression, expressed in heart and muscle.

It is found in the cytoplasm. The protein localises to the membrane. Inhibits signal transduction by increasing the GTPase activity of G protein alpha subunits thereby driving them into their inactive GDP-bound form. Binds to G(i)-alpha and G(o)-alpha, but not to G(s)-alpha. The protein is Regulator of G-protein signaling 5 (Rgs5) of Mus musculus (Mouse).